Reading from the N-terminus, the 61-residue chain is uncharacterized protein (61 aa).

Residues 36–61 (RLTDVPPQPNSPPDNVFNPDQPRMGP) form a disordered region.

It belongs to the ART2/RRT15 family.

This is an uncharacterized protein from Saccharomyces cerevisiae (strain ATCC 204508 / S288c) (Baker's yeast).